Consider the following 120-residue polypeptide: Movement protein TGB2 (120 aa).

Topologically, residues 1–8 (MPFAQPPD) are cytoplasmic. A helical membrane pass occupies residues 9–29 (YSKSVFPIAVGIAVAVVLFTL). Residues 30–71 (TRSTLPQVGDNIHNLPHGGNYQDGTKRISYCGPRDSFPSSSL) are Lumenal-facing. The chain crosses the membrane as a helical span at residues 72-92 (ISSGTPMIIGIIIFLIFAIYV). The Cytoplasmic segment spans residues 93–120 (SEKWSRSGSRRCSCCVPGAPACTATVHE).

The protein belongs to the Tymovirales TGBp2 protein family.

The protein resides in the host endoplasmic reticulum membrane. Functionally, plays a role in viral cell-to-cell propagation, by facilitating genome transport to neighboring plant cells through plasmosdesmata,. This is Movement protein TGB2 from Crataegus (hawthorn).